A 775-amino-acid polypeptide reads, in one-letter code: Kazrin (775 aa).

A disordered region spans residues 38-66 (AELSGGGGPGPGPGAAASASAAGDSAATN). The segment covering 51-64 (GAAASASAAGDSAA) has biased composition (low complexity). The stretch at 74–256 (AQVLLREEVS…LATLTKDVPK (183 aa)) forms a coiled coil. Positions 174-333 (RDFIRNYEQH…SAAEGDRSST (160 aa)) are interaction with PPL. The segment at 290-427 (QQTLYHSHPP…QSLSLSEGEE (138 aa)) is disordered. Ser-352, Ser-367, and Ser-387 each carry phosphoserine. A compositionally biased stretch (polar residues) spans 411-422 (SQCSPTRQSLSL). SAM domains follow at residues 446 to 511 (WKAG…YRDA), 524 to 588 (DHHW…LYQV), and 612 to 679 (WTNQ…SAVF). Disordered stretches follow at residues 688-715 (REAE…SSGL) and 729-762 (RGFS…LEQC). Over residues 732–742 (SSKDPDFHDDY) the composition is skewed to basic and acidic residues.

It belongs to the kazrin family. Isoform 2, isoform 3 and isoform 4 interact with PPL N-terminus. In terms of tissue distribution, isoform 2, isoform 3 and isoform 4 are expressed in several cell lines including keratinocytes and bladder and epidermoid carcinoma (at protein level). Isoform 2, isoform 3 and isoform 4 are expressed in hair follicle and interfollicular epidermis (at protein level).

The protein resides in the cytoplasm. The protein localises to the cytoskeleton. Its subcellular location is the cell junction. It is found in the desmosome. It localises to the nucleus. Functionally, component of the cornified envelope of keratinocytes. May be involved in the interplay between adherens junctions and desmosomes. The function in the nucleus is not known. The polypeptide is Kazrin (Homo sapiens (Human)).